A 365-amino-acid chain; its full sequence is UDP-galactose transporter homolog 1 (365 aa).

2 consecutive transmembrane segments (helical) span residues 42–62 and 80–100; these read IIDL…WAVL and ASLV…YAYL. Asn-115 carries an N-linked (GlcNAc...) asparagine glycan. Transmembrane regions (helical) follow at residues 182–202 and 206–226; these read YAVV…HAAP and SGAG…SMLL. Asn-231 is a glycosylation site (N-linked (GlcNAc...) asparagine). 4 consecutive transmembrane segments (helical) span residues 249 to 269, 289 to 309, 315 to 335, and 339 to 359; these read VMCG…LTFS, DIVL…QTLE, VLVT…VVWF, and LTLG…FEAW.

The protein belongs to the nucleotide-sugar transporter family. SLC35B subfamily.

It localises to the endoplasmic reticulum membrane. May be involved in specific transport of UDP-Gal from the cytosol to the Golgi lumen. Involved in the maintenance of optimal conditions for the folding of secretory pathway proteins in the endoplasmic reticulum. This is UDP-galactose transporter homolog 1 (HUT1) from Yarrowia lipolytica (strain CLIB 122 / E 150) (Yeast).